Reading from the N-terminus, the 99-residue chain is A-type ATP synthase subunit F (99 aa).

It belongs to the V-ATPase F subunit family. As to quaternary structure, has multiple subunits with at least A(3), B(3), C, D, E, F, H, I and proteolipid K(x).

The protein localises to the cell membrane. Functionally, component of the A-type ATP synthase that produces ATP from ADP in the presence of a proton gradient across the membrane. In Methanococcus maripaludis (strain C7 / ATCC BAA-1331), this protein is A-type ATP synthase subunit F.